We begin with the raw amino-acid sequence, 185 residues long: Ribosome-recycling factor (185 aa).

It belongs to the RRF family.

The protein resides in the cytoplasm. Functionally, responsible for the release of ribosomes from messenger RNA at the termination of protein biosynthesis. May increase the efficiency of translation by recycling ribosomes from one round of translation to another. This is Ribosome-recycling factor from Shewanella halifaxensis (strain HAW-EB4).